A 295-amino-acid polypeptide reads, in one-letter code: Transcriptional regulator SirC (295 aa).

An HTH araC/xylS-type domain is found at 195–292 (EKVYNIIISD…KITPLSFMRT (98 aa)). 2 DNA-binding regions (H-T-H motif) span residues 212–233 (AEVA…AAEE) and 259–282 (ISQV…KRHF).

Functionally, positive regulator of the expression of the invasion-associated type III secretion system encoded within SPI-1 (pathogenicity island 1). The protein is Transcriptional regulator SirC (sirC) of Salmonella typhi.